The following is a 135-amino-acid chain: Small ribosomal subunit protein uS9 (135 aa).

The segment at 96–135 is disordered; the sequence is SADNRKPLKTEGHLSRDPRAKERRKYGLKKARKAPQFSKR. A compositionally biased stretch (basic and acidic residues) spans 97 to 115; the sequence is ADNRKPLKTEGHLSRDPRA. Positions 116 to 135 are enriched in basic residues; sequence KERRKYGLKKARKAPQFSKR.

This sequence belongs to the universal ribosomal protein uS9 family.

The protein is Small ribosomal subunit protein uS9 of Prochlorococcus marinus (strain MIT 9313).